Here is a 463-residue protein sequence, read N- to C-terminus: Retinoic acid receptor RXR-gamma (463 aa).

Residues 1 to 138 (MYGNYSHFMK…TSPGSLVKHI (138 aa)) form a modulating region. Positions 18–53 (SPGHTGSTSMSPSAALSTGKPMDSHPSYTDTPVSAP) are disordered. Over residues 21-33 (HTGSTSMSPSAAL) the composition is skewed to polar residues. 2 NR C4-type zinc fingers span residues 139 to 159 (CAIC…CEGC) and 175 to 194 (CRDN…CQYC). The segment at residues 139 to 204 (CAICGDRSSG…RYQKCLVMGM (66 aa)) is a DNA-binding region (nuclear receptor). A hinge region spans residues 205–230 (KREAVQEERQRSRERAESEAECASSG). Basic and acidic residues predominate over residues 211-222 (EERQRSRERAES). The tract at residues 211 to 232 (EERQRSRERAESEAECASSGHE) is disordered. One can recognise an NR LBD domain in the interval 231–459 (HEDMPVERIL…TFLMEMLETP (229 aa)).

This sequence belongs to the nuclear hormone receptor family. NR2 subfamily. As to quaternary structure, homodimer. Heterodimer with a RAR molecule. Binds DNA preferentially as a RAR/RXR heterodimer. Interacts with RARA. Post-translationally, acetylated by EP300.

The protein resides in the nucleus. The protein localises to the cytoplasm. Functionally, receptor for retinoic acid. Retinoic acid receptors bind as heterodimers to their target response elements in response to their ligands, all-trans or 9-cis retinoic acid, and regulate gene expression in various biological processes. The RAR/RXR heterodimers bind to the retinoic acid response elements (RARE) composed of tandem 5'-AGGTCA-3' sites known as DR1-DR5. The high affinity ligand for RXRs is 9-cis retinoic acid. This is Retinoic acid receptor RXR-gamma (RXRG) from Pongo abelii (Sumatran orangutan).